A 403-amino-acid chain; its full sequence is Octaketide synthase 1 (403 aa).

C174 is an active-site residue. Residues S281 and 318–321 (GGRA) each bind CoA.

This sequence belongs to the thiolase-like superfamily. Chalcone/stilbene synthases family. Homodimer.

The protein operates within secondary metabolite biosynthesis; flavonoid biosynthesis. Catalyzes the iterative condensations of 8 molecules of malonyl-CoA to produce aromatic octaketides, SEK4 and SEK4b, the products of the minimal polyketide synthase for the benzoisochromanequinone actinorhodin. May be involved in the biosynthesis of the octaketide barbaloin. In Aloe arborescens (Kidachi aloe), this protein is Octaketide synthase 1.